The chain runs to 264 residues: MPASREDSVYLAKLAEQAERYEEMVENMKAVASSGQELSVEERNLLSVAYKNVIGARRASWRIVSSIEQKEEAKGNESQVALIRDYRAKIEAELSKICEDILSVLSDHLITSAQTGESKVFYYKMKGDYHRYLAEFAIAEKRKEAADLSLEAYKAASDVAVTELPPTHPIRLGLALNFSVFYYEILNSPDRACHLAKQAFDDAVADLETLSEDSYKDSTLIMQLLRDNLTLWTDLSEAPAATEEQQQSSQAPAAQPTEGKADQE.

The segment covering 236 to 258 (SEAPAATEEQQQSSQAPAAQPTE) has biased composition (low complexity). The tract at residues 236–264 (SEAPAATEEQQQSSQAPAAQPTEGKADQE) is disordered.

Belongs to the 14-3-3 family.

In Candida albicans (strain SC5314 / ATCC MYA-2876) (Yeast), this protein is 14-3-3 protein homolog (BMH1).